Reading from the N-terminus, the 697-residue chain is MAR-binding filament-like protein 1 (697 aa).

The transit peptide at 1–41 directs the protein to the chloroplast; that stretch reads MATSCFPPFSASSSSLCSSQFTPLLSCPRNTQICRKKRPVM. A thylakoid-targeting transit peptide spans 42–79; sequence ASMHSENQKESNVCNRRSILFVGFSVLPLLNLRARALE. Topologically, residues 80–106 are lumenal, thylakoid; sequence GLSTDSQAQPQKEETEQTIQGSAGNPF. The interval 81–100 is disordered; it reads LSTDSQAQPQKEETEQTIQG. The helical transmembrane segment at 107-127 threads the bilayer; that stretch reads VSLLNGLGVVGSGVLGSLYAL. Over 128-697 the chain is Stromal; sequence ARNEKAVSDA…GEKEKVNVQQ (570 aa). Residues 203-671 are a coiled coil; the sequence is LQNEKKLAED…KGEILRLRSQ (469 aa). Residues 599 to 629 are disordered; sequence TSRNSSLEDEREVHRQSVSEQKQISQEAQEN. The span at 604–615 shows a compositional bias: basic and acidic residues; the sequence is SLEDEREVHRQS. Over residues 616–627 the composition is skewed to polar residues; sequence VSEQKQISQEAQ.

Interacts with MAF1. Interacts with PTST2; the interaction is essential for the initiation of starch granules biosynthesis in leaf chloroplasts, for the correct location of the process in the stromal spaces between the thylakoid membranes, and for the association of PTST2 with the thylakoid membranes. Phosphorylated in vitro by human casein kinase II. In terms of processing, predicted to be translocated into the thylakoid by the Tat system.

The protein localises to the plastid. It localises to the chloroplast. The protein resides in the chloroplast thylakoid membrane. It is found in the chloroplast stroma. Its subcellular location is the chloroplast nucleoid. The protein localises to the nucleus. It localises to the nucleus matrix. Functionally, required for the initiation of starch granules biosynthesis in leaf chloroplasts. Anchored to the thylakoid membranes with its C-terminus facing into the stroma where it is essential for localizing PTST2 and SS4 to the stromal spaces between the thylakoid membranes in order to begin starch granule formation. Associated with leaf chloroplastic nucleoids in vivo. Binds to various chloroplastic double-stranded DNA fragments without particular sequence specificity in vitro. May function at the interface between nucleoids and thylakoids possibly by anchoring nucleoids to the thylakoid membrane system in mature chloroplasts. Binds nuclear DNA. Interacts with chromatin via matrix attachment regions (MARs). Likely to participate in nuclear architecture by connecting chromatin with the nuclear matrix and potentially with the nuclear envelope. This Solanum lycopersicum (Tomato) protein is MAR-binding filament-like protein 1.